A 585-amino-acid chain; its full sequence is Aspartate--tRNA ligase (585 aa).

Glu173 contacts L-aspartate. The segment at 197 to 200 (QTLK) is aspartate. Residue Arg219 participates in L-aspartate binding. ATP is bound by residues 219–221 (RDE) and Gln228. His446 contacts L-aspartate. Glu480 contacts ATP. Arg487 lines the L-aspartate pocket. Residue 532 to 535 (GLDR) participates in ATP binding.

This sequence belongs to the class-II aminoacyl-tRNA synthetase family. Type 1 subfamily. As to quaternary structure, homodimer.

The protein localises to the cytoplasm. It carries out the reaction tRNA(Asp) + L-aspartate + ATP = L-aspartyl-tRNA(Asp) + AMP + diphosphate. Catalyzes the attachment of L-aspartate to tRNA(Asp) in a two-step reaction: L-aspartate is first activated by ATP to form Asp-AMP and then transferred to the acceptor end of tRNA(Asp). The sequence is that of Aspartate--tRNA ligase from Bacteroides fragilis (strain ATCC 25285 / DSM 2151 / CCUG 4856 / JCM 11019 / LMG 10263 / NCTC 9343 / Onslow / VPI 2553 / EN-2).